Reading from the N-terminus, the 675-residue chain is Methionine--tRNA ligase (675 aa).

A 'HIGH' region motif is present at residues 15-25; the sequence is PYANGSIHLGH. Positions 146, 149, 159, and 162 each coordinate Zn(2+). The short motif at 332–336 is the 'KMSKS' region element; sequence KMSKS. K335 contributes to the ATP binding site. The region spanning 573–675 is the tRNA-binding domain; that stretch reads DFAKVDMRIA…SGAQPGMQVK (103 aa).

The protein belongs to the class-I aminoacyl-tRNA synthetase family. MetG type 1 subfamily. As to quaternary structure, homodimer. It depends on Zn(2+) as a cofactor.

Its subcellular location is the cytoplasm. It carries out the reaction tRNA(Met) + L-methionine + ATP = L-methionyl-tRNA(Met) + AMP + diphosphate. Its function is as follows. Is required not only for elongation of protein synthesis but also for the initiation of all mRNA translation through initiator tRNA(fMet) aminoacylation. This Serratia proteamaculans (strain 568) protein is Methionine--tRNA ligase.